A 131-amino-acid polypeptide reads, in one-letter code: Transcription antitermination protein NusB (131 aa).

It belongs to the NusB family.

Functionally, involved in transcription antitermination. Required for transcription of ribosomal RNA (rRNA) genes. Binds specifically to the boxA antiterminator sequence of the ribosomal RNA (rrn) operons. The protein is Transcription antitermination protein NusB of Campylobacter concisus (strain 13826).